The following is an 815-amino-acid chain: Translation initiation factor IF-2 (815 aa).

The 168-residue stretch at 315–482 folds into the tr-type G domain; it reads ARPPVVTIMG…AISLTAEVLE (168 aa). The segment at 324 to 331 is G1; sequence GHVDHGKT. Residue 324–331 coordinates GTP; the sequence is GHVDHGKT. Residues 349–353 are G2; it reads GITQH. The segment at 370–373 is G3; it reads DTPG. GTP is bound by residues 370 to 374 and 424 to 427; these read DTPGH and NKID. The tract at residues 424 to 427 is G4; the sequence is NKID. Positions 460–462 are G5; that stretch reads SAY.

This sequence belongs to the TRAFAC class translation factor GTPase superfamily. Classic translation factor GTPase family. IF-2 subfamily.

It localises to the cytoplasm. Functionally, one of the essential components for the initiation of protein synthesis. Protects formylmethionyl-tRNA from spontaneous hydrolysis and promotes its binding to the 30S ribosomal subunits. Also involved in the hydrolysis of GTP during the formation of the 70S ribosomal complex. In Ruthia magnifica subsp. Calyptogena magnifica, this protein is Translation initiation factor IF-2.